The primary structure comprises 447 residues: Na(+)-translocating NADH-quinone reductase subunit A (447 aa).

This sequence belongs to the NqrA family. In terms of assembly, composed of six subunits; NqrA, NqrB, NqrC, NqrD, NqrE and NqrF.

The enzyme catalyses a ubiquinone + n Na(+)(in) + NADH + H(+) = a ubiquinol + n Na(+)(out) + NAD(+). NQR complex catalyzes the reduction of ubiquinone-1 to ubiquinol by two successive reactions, coupled with the transport of Na(+) ions from the cytoplasm to the periplasm. NqrA to NqrE are probably involved in the second step, the conversion of ubisemiquinone to ubiquinol. This Haemophilus influenzae (strain ATCC 51907 / DSM 11121 / KW20 / Rd) protein is Na(+)-translocating NADH-quinone reductase subunit A.